Reading from the N-terminus, the 179-residue chain is Large ribosomal subunit protein uL5 (179 aa).

Belongs to the universal ribosomal protein uL5 family. As to quaternary structure, part of the 50S ribosomal subunit; part of the 5S rRNA/L5/L18/L25 subcomplex. Contacts the 5S rRNA and the P site tRNA. Forms a bridge to the 30S subunit in the 70S ribosome.

Functionally, this is one of the proteins that bind and probably mediate the attachment of the 5S RNA into the large ribosomal subunit, where it forms part of the central protuberance. In the 70S ribosome it contacts protein S13 of the 30S subunit (bridge B1b), connecting the 2 subunits; this bridge is implicated in subunit movement. Contacts the P site tRNA; the 5S rRNA and some of its associated proteins might help stabilize positioning of ribosome-bound tRNAs. This Bdellovibrio bacteriovorus (strain ATCC 15356 / DSM 50701 / NCIMB 9529 / HD100) protein is Large ribosomal subunit protein uL5.